The primary structure comprises 475 residues: Nucleoporin-like protein amo1 (475 aa).

A C3H1-type zinc finger spans residues 1 to 25 (MVVCKYFLQNRCRYGTNCKNQHTVP). Polar residues predominate over residues 165-182 (DKSTSNSTVTSNQFNKPT). Disordered regions lie at residues 165-208 (DKST…DIFG) and 220-252 (NASPFSQNTSSNSFTGSNPVQNNPSSFGSSSFG). Over residues 183–204 (QNSPFNSFSNNNNSFNNNQQAN) the composition is skewed to low complexity. Over residues 220 to 242 (NASPFSQNTSSNSFTGSNPVQNN) the composition is skewed to polar residues. The segment covering 243-252 (PSSFGSSSFG) has biased composition (low complexity).

Its subcellular location is the nucleus. In terms of biological role, involved in the cell polarity process where it is required for the correct termination of microtubule growth at the cell ends during interphase. In Schizosaccharomyces pombe (strain 972 / ATCC 24843) (Fission yeast), this protein is Nucleoporin-like protein amo1 (amo1).